Consider the following 159-residue polypeptide: NADH-quinone oxidoreductase subunit I (159 aa).

2 consecutive 4Fe-4S ferredoxin-type domains span residues 51–80 (RRYE…IEAD) and 90–119 (TRYD…EGPN). [4Fe-4S] cluster-binding residues include C60, C63, C66, C70, C99, C102, C105, and C109.

Belongs to the complex I 23 kDa subunit family. In terms of assembly, NDH-1 is composed of 14 different subunits. Subunits NuoA, H, J, K, L, M, N constitute the membrane sector of the complex. It depends on [4Fe-4S] cluster as a cofactor.

It is found in the cell inner membrane. The enzyme catalyses a quinone + NADH + 5 H(+)(in) = a quinol + NAD(+) + 4 H(+)(out). Functionally, NDH-1 shuttles electrons from NADH, via FMN and iron-sulfur (Fe-S) centers, to quinones in the respiratory chain. The immediate electron acceptor for the enzyme in this species is believed to be ubiquinone. Couples the redox reaction to proton translocation (for every two electrons transferred, four hydrogen ions are translocated across the cytoplasmic membrane), and thus conserves the redox energy in a proton gradient. The protein is NADH-quinone oxidoreductase subunit I of Rickettsia felis (strain ATCC VR-1525 / URRWXCal2) (Rickettsia azadi).